Reading from the N-terminus, the 76-residue chain is MPHIDVKHFPRNLSEEEKKVIAEDLAAVLKKHFGSSDDSLSVAFNEIQPDRWKDEVYDPIIKPHLDTLAKKPGYSY.

Pro-2 (proton acceptor; via imino nitrogen) is an active-site residue.

This sequence belongs to the 4-oxalocrotonate tautomerase family. PptA subfamily. In terms of assembly, homodimer.

The protein localises to the cytoplasm. This chain is Tautomerase PptA, found in Pectobacterium carotovorum subsp. carotovorum (strain PC1).